A 362-amino-acid chain; its full sequence is 3-dehydroquinate synthase (362 aa).

NAD(+)-binding positions include 71 to 76 (DGEQYK), 105 to 109 (GVIGD), 129 to 130 (TT), Lys142, Lys151, and 169 to 172 (CLQT). 3 residues coordinate Zn(2+): Glu184, His247, and His264.

It belongs to the sugar phosphate cyclases superfamily. Dehydroquinate synthase family. Co(2+) is required as a cofactor. The cofactor is Zn(2+). NAD(+) serves as cofactor.

The protein localises to the cytoplasm. The catalysed reaction is 7-phospho-2-dehydro-3-deoxy-D-arabino-heptonate = 3-dehydroquinate + phosphate. Its pathway is metabolic intermediate biosynthesis; chorismate biosynthesis; chorismate from D-erythrose 4-phosphate and phosphoenolpyruvate: step 2/7. Catalyzes the conversion of 3-deoxy-D-arabino-heptulosonate 7-phosphate (DAHP) to dehydroquinate (DHQ). This is 3-dehydroquinate synthase from Cronobacter sakazakii (strain ATCC BAA-894) (Enterobacter sakazakii).